The following is a 176-amino-acid chain: Probable inosine/xanthosine triphosphatase (176 aa).

D36 provides a ligand contact to Mg(2+).

This sequence belongs to the YjjX NTPase family. As to quaternary structure, homodimer. Mg(2+) is required as a cofactor. Mn(2+) serves as cofactor.

The enzyme catalyses XTP + H2O = XDP + phosphate + H(+). The catalysed reaction is ITP + H2O = IDP + phosphate + H(+). Its function is as follows. Phosphatase that hydrolyzes non-canonical purine nucleotides such as XTP and ITP to their respective diphosphate derivatives. Probably excludes non-canonical purines from DNA/RNA precursor pool, thus preventing their incorporation into DNA/RNA and avoiding chromosomal lesions. The protein is Probable inosine/xanthosine triphosphatase of Saccharolobus solfataricus (strain ATCC 35092 / DSM 1617 / JCM 11322 / P2) (Sulfolobus solfataricus).